An 883-amino-acid chain; its full sequence is Translation initiation factor IF-2 (883 aa).

Disordered regions lie at residues Met1–Met96 and Gln132–Leu259. Residues Pro57–Glu66 are compositionally biased toward low complexity. Positions Thr72–Ser87 are enriched in pro residues. Basic and acidic residues predominate over residues Gln132 to Asp188. Residues Pro191–Glu217 are compositionally biased toward low complexity. The tr-type G domain maps to Pro380–Lys551. The segment at Gly389–Thr396 is G1. Gly389–Thr396 contributes to the GTP binding site. Positions Gly414 to His418 are G2. Positions Asp437 to Gly440 are G3. GTP contacts are provided by residues Asp437 to His441 and Asn491 to Asp494. The tract at residues Asn491–Asp494 is G4. The segment at Ser527–Lys529 is G5.

This sequence belongs to the TRAFAC class translation factor GTPase superfamily. Classic translation factor GTPase family. IF-2 subfamily.

The protein localises to the cytoplasm. Functionally, one of the essential components for the initiation of protein synthesis. Protects formylmethionyl-tRNA from spontaneous hydrolysis and promotes its binding to the 30S ribosomal subunits. Also involved in the hydrolysis of GTP during the formation of the 70S ribosomal complex. In Rhodopseudomonas palustris (strain BisB5), this protein is Translation initiation factor IF-2.